A 226-amino-acid polypeptide reads, in one-letter code: Uracil phosphoribosyltransferase (226 aa).

Residue 36-40 (KGLVK) coordinates GTP. 5-phospho-alpha-D-ribose 1-diphosphate-binding positions include Arg86, Arg111, and 145-153 (DPMLATGST). Uracil-binding positions include Ile211 and 216–218 (GDA). Position 217 (Asp217) interacts with 5-phospho-alpha-D-ribose 1-diphosphate.

The protein belongs to the UPRTase family. Requires Mg(2+) as cofactor.

The catalysed reaction is UMP + diphosphate = 5-phospho-alpha-D-ribose 1-diphosphate + uracil. It functions in the pathway pyrimidine metabolism; UMP biosynthesis via salvage pathway; UMP from uracil: step 1/1. With respect to regulation, allosterically activated by GTP. Functionally, catalyzes the conversion of uracil and 5-phospho-alpha-D-ribose 1-diphosphate (PRPP) to UMP and diphosphate. In Haloquadratum walsbyi (strain DSM 16790 / HBSQ001), this protein is Uracil phosphoribosyltransferase.